A 217-amino-acid polypeptide reads, in one-letter code: FGFR1 oncogene partner 2 homolog (217 aa).

2 coiled-coil regions span residues Thr6 to Tyr106 and Lys163 to Ser188. The tract at residues Lys194–Ser217 is disordered. The span at Glu199–Ser217 shows a compositional bias: polar residues.

It belongs to the SIKE family.

The protein localises to the cytoplasm. This chain is FGFR1 oncogene partner 2 homolog (FGFR1OP2), found in Gallus gallus (Chicken).